We begin with the raw amino-acid sequence, 350 residues long: tRNA uridine(34) hydroxylase (350 aa).

Positions 146 to 240 (DDPDALFIDM…YARKAREQGL (95 aa)) constitute a Rhodanese domain. Residue Cys200 is the Cysteine persulfide intermediate of the active site.

This sequence belongs to the TrhO family.

The catalysed reaction is uridine(34) in tRNA + AH2 + O2 = 5-hydroxyuridine(34) in tRNA + A + H2O. In terms of biological role, catalyzes oxygen-dependent 5-hydroxyuridine (ho5U) modification at position 34 in tRNAs, the first step in 5-carboxymethoxyuridine (cmo5U) biosynthesis. May be part of an alternate pathway, which is able to bypass cmo5U biogenesis in a subset of tRNAs under aerobic conditions. The protein is tRNA uridine(34) hydroxylase of Escherichia coli O157:H7.